We begin with the raw amino-acid sequence, 276 residues long: Pantothenate synthetase (276 aa).

An ATP-binding site is contributed by 27-34 (MGALHKGH). Residue His34 is the Proton donor of the active site. Position 58 (Gln58) interacts with (R)-pantoate. Gln58 provides a ligand contact to beta-alanine. Residue 147 to 150 (GKKD) coordinates ATP. A (R)-pantoate-binding site is contributed by Gln153. ATP is bound by residues Val176 and 184-187 (LSSR).

Belongs to the pantothenate synthetase family. As to quaternary structure, homodimer.

It is found in the cytoplasm. The enzyme catalyses (R)-pantoate + beta-alanine + ATP = (R)-pantothenate + AMP + diphosphate + H(+). Its pathway is cofactor biosynthesis; (R)-pantothenate biosynthesis; (R)-pantothenate from (R)-pantoate and beta-alanine: step 1/1. In terms of biological role, catalyzes the condensation of pantoate with beta-alanine in an ATP-dependent reaction via a pantoyl-adenylate intermediate. The chain is Pantothenate synthetase from Helicobacter acinonychis (strain Sheeba).